The following is a 1859-amino-acid chain: DNA-directed RNA polymerase subunit beta'' (1859 aa).

Residues Cys-286, Cys-359, Cys-366, and Cys-369 each contribute to the Zn(2+) site.

This sequence belongs to the RNA polymerase beta' chain family. RpoC2 subfamily. In terms of assembly, in plastids the minimal PEP RNA polymerase catalytic core is composed of four subunits: alpha, beta, beta', and beta''. When a (nuclear-encoded) sigma factor is associated with the core the holoenzyme is formed, which can initiate transcription. Requires Zn(2+) as cofactor.

It localises to the plastid. The protein resides in the chloroplast. It carries out the reaction RNA(n) + a ribonucleoside 5'-triphosphate = RNA(n+1) + diphosphate. DNA-dependent RNA polymerase catalyzes the transcription of DNA into RNA using the four ribonucleoside triphosphates as substrates. The polypeptide is DNA-directed RNA polymerase subunit beta'' (Oltmannsiellopsis viridis (Marine flagellate)).